Consider the following 378-residue polypeptide: MLPLSIKDDEYKPPKFNLFGKISGWFRSILSDKTSRNLFFFLCLNLSFAFVELLYGIWSNCLGLISDSFHMFFDSTAILAGLAASVISKWRDNDAFSYGYVRAEVLAGFVNGLFLIFTAFFIFSEGVERALAPPDVHHERLLLVSILGFVVNLVGIFVFNHGGHGHSHGSGHGHSHSLFNGALDHSHGHEDHCHSHEAKHGAAHSHDHDHAHGHGHLHSHDGPSFKATAGPSRQILQGVFLHILADTLGSIGVIASAIMMQNFGLMIADPICSILIAILIVVSVIPLLRESVGILMQRTPPSLENTLPQCYQRVQQLQGVYNLQEQHFWTLCSDVYVGTLKLVVAPDADARWILSQTHNIFTQAGVRQLYVQIDFAAM.

Residues 1–37 (MLPLSIKDDEYKPPKFNLFGKISGWFRSILSDKTSRN) lie on the Cytoplasmic side of the membrane. The chain crosses the membrane as a helical span at residues 38–58 (LFFFLCLNLSFAFVELLYGIW). At 59–67 (SNCLGLISD) the chain is on the lumenal side. Residues 68–88 (SFHMFFDSTAILAGLAASVIS) traverse the membrane as a helical segment. Residues 89 to 102 (KWRDNDAFSYGYVR) are Cytoplasmic-facing. The helical transmembrane segment at 103–123 (AEVLAGFVNGLFLIFTAFFIF) threads the bilayer. Topologically, residues 124-140 (SEGVERALAPPDVHHER) are lumenal. Residues 141–161 (LLLVSILGFVVNLVGIFVFNH) form a helical membrane-spanning segment. Residues 161–220 (HGGHGHSHGSGHGHSHSLFNGALDHSHGHEDHCHSHEAKHGAAHSHDHDHAHGHGHLHSH) form a his-rich loop region. Residues 162 to 238 (GGHGHSHGSG…AGPSRQILQG (77 aa)) lie on the Cytoplasmic side of the membrane. Basic and acidic residues predominate over residues 186–223 (SHGHEDHCHSHEAKHGAAHSHDHDHAHGHGHLHSHDGP). The disordered stretch occupies residues 186 to 224 (SHGHEDHCHSHEAKHGAAHSHDHDHAHGHGHLHSHDGPS). Residues 239 to 259 (VFLHILADTLGSIGVIASAIM) form a helical membrane-spanning segment. Residues 260 to 264 (MQNFG) lie on the Lumenal side of the membrane. Residues 265 to 285 (LMIADPICSILIAILIVVSVI) form a helical membrane-spanning segment. Over 286–378 (PLLRESVGIL…LYVQIDFAAM (93 aa)) the chain is Cytoplasmic.

The protein belongs to the cation diffusion facilitator (CDF) transporter (TC 2.A.4) family. SLC30A subfamily. As to quaternary structure, homooligomer. Highly expressed in liver, spleen, duodenum and part of the jejunum of small intestine (at protein level). Moderately expressed in kidney, lung, and brain. Barely detectable in heart. In brain, expressed in cerebellum, cerebral cortex and hippocampus (at protein level).

It localises to the golgi apparatus membrane. The protein resides in the cytoplasmic vesicle. The protein localises to the golgi apparatus. It is found in the trans-Golgi network. Its subcellular location is the sarcoplasmic reticulum. It localises to the mitochondrion. It catalyses the reaction Zn(2+)(in) = Zn(2+)(out). In terms of biological role, zinc ion transporter mediating zinc entry from the cytosol into the lumen of organelles along the secretory pathway. By contributing to zinc ion homeostasis within the early secretory pathway, regulates the activation and folding of enzymes like alkaline phosphatases. The polypeptide is Zinc transporter 7 (Mus musculus (Mouse)).